A 169-amino-acid chain; its full sequence is Peptide deformylase (169 aa).

Fe cation contacts are provided by C91 and H133. Residue E134 is part of the active site. H137 is a binding site for Fe cation.

Belongs to the polypeptide deformylase family. Requires Fe(2+) as cofactor.

It catalyses the reaction N-terminal N-formyl-L-methionyl-[peptide] + H2O = N-terminal L-methionyl-[peptide] + formate. Removes the formyl group from the N-terminal Met of newly synthesized proteins. Requires at least a dipeptide for an efficient rate of reaction. N-terminal L-methionine is a prerequisite for activity but the enzyme has broad specificity at other positions. The protein is Peptide deformylase of Serratia proteamaculans (strain 568).